Consider the following 324-residue polypeptide: Putative transport protein TM_1187 (324 aa).

8 consecutive transmembrane segments (helical) span residues 12 to 32 (LYLV…TALI), 62 to 82 (ISNV…FPVI), 105 to 125 (IPGW…EGAL), 131 to 151 (IVGY…TAFI), 190 to 210 (GGQV…AFIF), 227 to 247 (FVPY…AFSV), 252 to 272 (GLLI…WVLA), and 285 to 305 (FIIL…GVLI).

Belongs to the autoinducer-2 exporter (AI-2E) (TC 2.A.86) family.

The protein localises to the cell membrane. The polypeptide is Putative transport protein TM_1187 (Thermotoga maritima (strain ATCC 43589 / DSM 3109 / JCM 10099 / NBRC 100826 / MSB8)).